The following is a 31-amino-acid chain: Delta-actitoxin-Dar1b (31 aa).

Belongs to the sea anemone short toxin (type III) family. Contains 4 disulfide bonds.

The protein localises to the secreted. The protein resides in the nematocyst. Its function is as follows. Binds specifically to voltage-gated sodium channels (Nav), thereby delaying their inactivation during signal transduction. In Dofleinia armata (Armed anemone), this protein is Delta-actitoxin-Dar1b.